The chain runs to 236 residues: 2-C-methyl-D-erythritol 4-phosphate cytidylyltransferase (236 aa).

The protein belongs to the IspD/TarI cytidylyltransferase family. IspD subfamily. In terms of assembly, homodimer.

The enzyme catalyses 2-C-methyl-D-erythritol 4-phosphate + CTP + H(+) = 4-CDP-2-C-methyl-D-erythritol + diphosphate. The protein operates within isoprenoid biosynthesis; isopentenyl diphosphate biosynthesis via DXP pathway; isopentenyl diphosphate from 1-deoxy-D-xylulose 5-phosphate: step 2/6. Functionally, catalyzes the formation of 4-diphosphocytidyl-2-C-methyl-D-erythritol from CTP and 2-C-methyl-D-erythritol 4-phosphate (MEP). In Salmonella schwarzengrund (strain CVM19633), this protein is 2-C-methyl-D-erythritol 4-phosphate cytidylyltransferase.